Reading from the N-terminus, the 210-residue chain is N-(5'-phosphoribosyl)anthranilate isomerase (210 aa).

This sequence belongs to the TrpF family.

It carries out the reaction N-(5-phospho-beta-D-ribosyl)anthranilate = 1-(2-carboxyphenylamino)-1-deoxy-D-ribulose 5-phosphate. It participates in amino-acid biosynthesis; L-tryptophan biosynthesis; L-tryptophan from chorismate: step 3/5. This is N-(5'-phosphoribosyl)anthranilate isomerase from Pseudomonas fluorescens (strain ATCC BAA-477 / NRRL B-23932 / Pf-5).